The chain runs to 602 residues: 4-hydroxy-3-methylbut-2-en-1-yl diphosphate synthase (flavodoxin) (602 aa).

Residues Cys508, Cys511, Cys543, and Glu550 each coordinate [4Fe-4S] cluster.

It belongs to the IspG family. It depends on [4Fe-4S] cluster as a cofactor.

The catalysed reaction is (2E)-4-hydroxy-3-methylbut-2-enyl diphosphate + oxidized [flavodoxin] + H2O + 2 H(+) = 2-C-methyl-D-erythritol 2,4-cyclic diphosphate + reduced [flavodoxin]. The protein operates within isoprenoid biosynthesis; isopentenyl diphosphate biosynthesis via DXP pathway; isopentenyl diphosphate from 1-deoxy-D-xylulose 5-phosphate: step 5/6. Converts 2C-methyl-D-erythritol 2,4-cyclodiphosphate (ME-2,4cPP) into 1-hydroxy-2-methyl-2-(E)-butenyl 4-diphosphate. The sequence is that of 4-hydroxy-3-methylbut-2-en-1-yl diphosphate synthase (flavodoxin) from Chlamydia trachomatis serovar L2 (strain ATCC VR-902B / DSM 19102 / 434/Bu).